Reading from the N-terminus, the 32-residue chain is Photosystem II reaction center protein Z (32 aa).

A helical transmembrane segment spans residues 9-31; that stretch reads FILLGAVTWAILVFIVGSLNSYV.

Belongs to the PsbZ family. PSII is composed of 1 copy each of membrane proteins PsbA, PsbB, PsbC, PsbD, PsbE, PsbF, PsbH, PsbI, PsbJ, PsbK, PsbL, PsbM, PsbT, PsbY, PsbZ, Psb30/Ycf12, at least 3 peripheral proteins of the oxygen-evolving complex and a large number of cofactors. It forms dimeric complexes.

The protein resides in the plastid. It is found in the chloroplast thylakoid membrane. May control the interaction of photosystem II (PSII) cores with the light-harvesting antenna, regulates electron flow through the 2 photosystem reaction centers. PSII is a light-driven water plastoquinone oxidoreductase, using light energy to abstract electrons from H(2)O, generating a proton gradient subsequently used for ATP formation. This Euglena stellata protein is Photosystem II reaction center protein Z.